A 428-amino-acid polypeptide reads, in one-letter code: 3-phosphoshikimate 1-carboxyvinyltransferase (428 aa).

3-phosphoshikimate-binding residues include lysine 23, serine 24, and arginine 28. Residue lysine 23 participates in phosphoenolpyruvate binding. Glycine 97 and arginine 125 together coordinate phosphoenolpyruvate. Residues serine 170, serine 171, glutamine 172, serine 198, aspartate 314, asparagine 337, and lysine 341 each coordinate 3-phosphoshikimate. Glutamine 172 contributes to the phosphoenolpyruvate binding site. Aspartate 314 functions as the Proton acceptor in the catalytic mechanism. Phosphoenolpyruvate is bound by residues arginine 345, arginine 387, and lysine 412.

It belongs to the EPSP synthase family. As to quaternary structure, monomer.

It localises to the cytoplasm. The catalysed reaction is 3-phosphoshikimate + phosphoenolpyruvate = 5-O-(1-carboxyvinyl)-3-phosphoshikimate + phosphate. It participates in metabolic intermediate biosynthesis; chorismate biosynthesis; chorismate from D-erythrose 4-phosphate and phosphoenolpyruvate: step 6/7. Functionally, catalyzes the transfer of the enolpyruvyl moiety of phosphoenolpyruvate (PEP) to the 5-hydroxyl of shikimate-3-phosphate (S3P) to produce enolpyruvyl shikimate-3-phosphate and inorganic phosphate. This is 3-phosphoshikimate 1-carboxyvinyltransferase from Cronobacter sakazakii (strain ATCC BAA-894) (Enterobacter sakazakii).